Here is a 104-residue protein sequence, read N- to C-terminus: Large ribosomal subunit protein uL23 (104 aa).

Belongs to the universal ribosomal protein uL23 family. As to quaternary structure, part of the 50S ribosomal subunit. Contacts protein L29, and trigger factor when it is bound to the ribosome.

In terms of biological role, one of the early assembly proteins it binds 23S rRNA. One of the proteins that surrounds the polypeptide exit tunnel on the outside of the ribosome. Forms the main docking site for trigger factor binding to the ribosome. This Cupriavidus metallidurans (strain ATCC 43123 / DSM 2839 / NBRC 102507 / CH34) (Ralstonia metallidurans) protein is Large ribosomal subunit protein uL23.